A 669-amino-acid chain; its full sequence is DNA ligase (669 aa).

Residues 35-39 (DSVYD), 84-85 (SL), and E116 each bind NAD(+). K118 acts as the N6-AMP-lysine intermediate in catalysis. Residues R139, E176, K291, and K315 each contribute to the NAD(+) site. C409, C412, C427, and C432 together coordinate Zn(2+). In terms of domain architecture, BRCT spans 591–669 (TTKATLAGKT…EAQLLELIKA (79 aa)).

Belongs to the NAD-dependent DNA ligase family. LigA subfamily. Mg(2+) is required as a cofactor. Requires Mn(2+) as cofactor.

It catalyses the reaction NAD(+) + (deoxyribonucleotide)n-3'-hydroxyl + 5'-phospho-(deoxyribonucleotide)m = (deoxyribonucleotide)n+m + AMP + beta-nicotinamide D-nucleotide.. Its function is as follows. DNA ligase that catalyzes the formation of phosphodiester linkages between 5'-phosphoryl and 3'-hydroxyl groups in double-stranded DNA using NAD as a coenzyme and as the energy source for the reaction. It is essential for DNA replication and repair of damaged DNA. The sequence is that of DNA ligase from Microcystis aeruginosa (strain NIES-843 / IAM M-2473).